Here is a 607-residue protein sequence, read N- to C-terminus: Dihydroxy-acid dehydratase (607 aa).

Residue Asp-81 participates in Mg(2+) binding. Cys-122 provides a ligand contact to [2Fe-2S] cluster. Asp-123 and Lys-124 together coordinate Mg(2+). At Lys-124 the chain carries N6-carboxylysine. Cys-195 is a binding site for [2Fe-2S] cluster. Glu-489 provides a ligand contact to Mg(2+). Ser-515 functions as the Proton acceptor in the catalytic mechanism.

This sequence belongs to the IlvD/Edd family. As to quaternary structure, homodimer. Requires [2Fe-2S] cluster as cofactor. Mg(2+) is required as a cofactor.

The enzyme catalyses (2R)-2,3-dihydroxy-3-methylbutanoate = 3-methyl-2-oxobutanoate + H2O. It catalyses the reaction (2R,3R)-2,3-dihydroxy-3-methylpentanoate = (S)-3-methyl-2-oxopentanoate + H2O. It functions in the pathway amino-acid biosynthesis; L-isoleucine biosynthesis; L-isoleucine from 2-oxobutanoate: step 3/4. It participates in amino-acid biosynthesis; L-valine biosynthesis; L-valine from pyruvate: step 3/4. In terms of biological role, functions in the biosynthesis of branched-chain amino acids. Catalyzes the dehydration of (2R,3R)-2,3-dihydroxy-3-methylpentanoate (2,3-dihydroxy-3-methylvalerate) into 2-oxo-3-methylpentanoate (2-oxo-3-methylvalerate) and of (2R)-2,3-dihydroxy-3-methylbutanoate (2,3-dihydroxyisovalerate) into 2-oxo-3-methylbutanoate (2-oxoisovalerate), the penultimate precursor to L-isoleucine and L-valine, respectively. This is Dihydroxy-acid dehydratase from Deinococcus radiodurans (strain ATCC 13939 / DSM 20539 / JCM 16871 / CCUG 27074 / LMG 4051 / NBRC 15346 / NCIMB 9279 / VKM B-1422 / R1).